The primary structure comprises 135 residues: uncharacterized protein (135 aa).

This sequence belongs to the transcriptional regulatory CopG/NikR family.

This is an uncharacterized protein from Methanocaldococcus jannaschii (strain ATCC 43067 / DSM 2661 / JAL-1 / JCM 10045 / NBRC 100440) (Methanococcus jannaschii).